We begin with the raw amino-acid sequence, 347 residues long: ATP-dependent kinase YFH7 (347 aa).

33-41 (GPPGSGKST) lines the ATP pocket.

The protein belongs to the YFH7 family.

In terms of biological role, ATP-dependent kinase that could be involved in endoplasmic reticulum membrane assembly. The chain is ATP-dependent kinase YFH7 (YFH7) from Lachancea thermotolerans (strain ATCC 56472 / CBS 6340 / NRRL Y-8284) (Yeast).